An 862-amino-acid chain; its full sequence is Phosphatidic acid phosphohydrolase 1 (862 aa).

The segment at 19–104 is N-LIP; it reads NPATLSGAID…VPDELLVSPV (86 aa). Disordered stretches follow at residues 104–183 and 300–341; these read VMSA…SVEE and GSTL…AGSG. The span at 105–117 shows a compositional bias: polar residues; that stretch reads MSATSSPPQSPET. 2 positions are modified to phosphoserine: Ser-110 and Ser-114. Over residues 132-143 the composition is skewed to basic and acidic residues; the sequence is NENKKKEKKVLE. Low complexity-rich tracts occupy residues 161–179 and 300–313; these read SETT…TPPD and GSTL…PSGS. At Ser-168 the chain carries Phosphoserine. The DXDXT motif signature appears at 398 to 402; sequence DIDGT. Lys-496 is subject to N6-acetyllysine. Ser-511 is modified (phosphoserine). Residue Ser-602 is modified to Phosphoserine; by CDC28. The tract at residues 648 to 732 is disordered; sequence SDISNDDSDN…TPNKSTMSKG (85 aa). Over residues 651-663 the composition is skewed to acidic residues; it reads SNDDSDNIDEDTD. Polar residues-rich tracts occupy residues 664 to 679 and 687 to 699; these read VSQQ…NSVK and PQRN…NNNE. Positions 710–730 are enriched in low complexity; that stretch reads ASDLVSSHSSSGSTPNKSTMS. Thr-723 carries the phosphothreonine; by CDC28 modification. Residue Ser-744 is modified to Phosphoserine; by CDC28. Phosphoserine occurs at positions 748, 773, and 774. Residues 757-780 are disordered; the sequence is MDDEDSNYNRTKSRRASSAAATSI. Residue Lys-801 is modified to N6-acetyllysine. The tract at residues 807-862 is disordered; it reads DVHSLGNSDTESRREQSVNETGRNQLPHNSMDDKDLDSRVSDEFDDDEFDEDEFED. 2 positions are modified to phosphoserine: Ser-810 and Ser-814. Position 816 is a phosphothreonine (Thr-816). The segment covering 824–834 has biased composition (polar residues); it reads VNETGRNQLPH. Positions 836-848 are enriched in basic and acidic residues; sequence SMDDKDLDSRVSD. Residues Ser-844 and Ser-847 each carry the phosphoserine modification. Acidic residues predominate over residues 849-862; sequence EFDDDEFDEDEFED.

The protein belongs to the lipin family. Mg(2+) serves as cofactor. Acetylation at Lys-496 and Lys-801 by ESA1 promotes synthesis of diacylglycerol. Post-translationally, phosphorylated by CDC28 at the onset of mitosis, and dephosphorylated by the NEM1-SPO7 complex. Phosphorylation regulates recruitment on promoters of lipid biosynthetic enzymes.

Its subcellular location is the cytoplasm. The protein localises to the nucleus membrane. The protein resides in the endoplasmic reticulum membrane. It catalyses the reaction a 1,2-diacyl-sn-glycero-3-phosphate + H2O = a 1,2-diacyl-sn-glycerol + phosphate. Phenylglyoxal and propranolol inhibit activity in dose-dependent manners with IC(50) values of 1.3 mM and 0.2 mM, respectively. Sertraline inhibits activity in a dose-dependent manner with an IC(50) value of 85 uM; the inhibitory effects of sertraline and propranolol are additive. Its function is as follows. Mg(2+)-dependent phosphatidate (PA) phosphatase which catalyzes the dephosphorylation of PA to yield diacylglycerol. Required for de novo lipid synthesis and formation of lipid droplets. Controls transcription of phospholipid biosynthetic genes and nuclear structure by regulating the amount of membrane present at the nuclear envelope. Involved in plasmid maintenance, in respiration and in cell proliferation. In Saccharomyces cerevisiae (strain ATCC 204508 / S288c) (Baker's yeast), this protein is Phosphatidic acid phosphohydrolase 1 (PAH1).